The sequence spans 709 residues: Elongation factor G (709 aa).

A tr-type G domain is found at Ala-9 to Leu-296. GTP contacts are provided by residues Ala-18–Thr-25, Asp-86–His-90, and Asn-140–Asp-143.

Belongs to the TRAFAC class translation factor GTPase superfamily. Classic translation factor GTPase family. EF-G/EF-2 subfamily.

The protein resides in the cytoplasm. Functionally, catalyzes the GTP-dependent ribosomal translocation step during translation elongation. During this step, the ribosome changes from the pre-translocational (PRE) to the post-translocational (POST) state as the newly formed A-site-bound peptidyl-tRNA and P-site-bound deacylated tRNA move to the P and E sites, respectively. Catalyzes the coordinated movement of the two tRNA molecules, the mRNA and conformational changes in the ribosome. The polypeptide is Elongation factor G (Streptomyces griseus subsp. griseus (strain JCM 4626 / CBS 651.72 / NBRC 13350 / KCC S-0626 / ISP 5235)).